The primary structure comprises 473 residues: UDP-N-acetylmuramate--L-alanine ligase (473 aa).

123–129 lines the ATP pocket; that stretch reads GTHGKTT.

Belongs to the MurCDEF family.

It is found in the cytoplasm. The enzyme catalyses UDP-N-acetyl-alpha-D-muramate + L-alanine + ATP = UDP-N-acetyl-alpha-D-muramoyl-L-alanine + ADP + phosphate + H(+). The protein operates within cell wall biogenesis; peptidoglycan biosynthesis. Functionally, cell wall formation. The polypeptide is UDP-N-acetylmuramate--L-alanine ligase (Marinomonas sp. (strain MWYL1)).